A 314-amino-acid polypeptide reads, in one-letter code: Ribosomal RNA small subunit methyltransferase H (314 aa).

Residues Gly33–His35, Asp52, Phe84, Asp105, and Gln112 contribute to the S-adenosyl-L-methionine site.

This sequence belongs to the methyltransferase superfamily. RsmH family.

It is found in the cytoplasm. The enzyme catalyses cytidine(1402) in 16S rRNA + S-adenosyl-L-methionine = N(4)-methylcytidine(1402) in 16S rRNA + S-adenosyl-L-homocysteine + H(+). Functionally, specifically methylates the N4 position of cytidine in position 1402 (C1402) of 16S rRNA. In Lactobacillus delbrueckii subsp. bulgaricus (strain ATCC 11842 / DSM 20081 / BCRC 10696 / JCM 1002 / NBRC 13953 / NCIMB 11778 / NCTC 12712 / WDCM 00102 / Lb 14), this protein is Ribosomal RNA small subunit methyltransferase H.